A 281-amino-acid chain; its full sequence is Pantothenate synthetase (281 aa).

31-38 (MGNLHAGH) lines the ATP pocket. The Proton donor role is filled by His38. Gln62 is a binding site for (R)-pantoate. Gln62 lines the beta-alanine pocket. Residue 150 to 153 (GKKD) participates in ATP binding. Gln156 is a (R)-pantoate binding site. ATP contacts are provided by residues Val179 and 187-190 (MSSR).

The protein belongs to the pantothenate synthetase family. Homodimer.

It is found in the cytoplasm. The catalysed reaction is (R)-pantoate + beta-alanine + ATP = (R)-pantothenate + AMP + diphosphate + H(+). The protein operates within cofactor biosynthesis; (R)-pantothenate biosynthesis; (R)-pantothenate from (R)-pantoate and beta-alanine: step 1/1. In terms of biological role, catalyzes the condensation of pantoate with beta-alanine in an ATP-dependent reaction via a pantoyl-adenylate intermediate. The sequence is that of Pantothenate synthetase from Xylella fastidiosa (strain 9a5c).